The primary structure comprises 445 residues: Sporulation-specific glucan 1,3-beta-glucosidase (445 aa).

The N-terminal stretch at 1–21 (MVSFRGLTTLTLLFTKLVNCN) is a signal peptide. The N-linked (GlcNAc...) asparagine glycan is linked to N201. E233 acts as the Proton donor in catalysis. E335 acts as the Nucleophile in catalysis.

The protein belongs to the glycosyl hydrolase 5 (cellulase A) family.

Its subcellular location is the secreted. The enzyme catalyses Successive hydrolysis of beta-D-glucose units from the non-reducing ends of (1-&gt;3)-beta-D-glucans, releasing alpha-glucose.. Probably involved in the processes of spore formation and contributes to ascospore thermoresistance by participating in the morphogenesis of ascospore walls. The enzyme may do this by modifying glucan linkages in the developing ascospore wall, thus strengthening it or lending it plasticity. The chain is Sporulation-specific glucan 1,3-beta-glucosidase (SPR1) from Saccharomyces cerevisiae (strain ATCC 204508 / S288c) (Baker's yeast).